The primary structure comprises 358 residues: Phospho-N-acetylmuramoyl-pentapeptide-transferase (358 aa).

The next 10 helical transmembrane spans lie at 25–45 (RTIY…PWVI), 73–93 (TMGG…WADL), 97–117 (YVWT…TDDY), 134–154 (MFWQ…VAGM), 172–192 (YLYI…VNLT), 197–217 (GLAI…AYIA), 233–253 (GAGE…GFLW), 261–281 (VFMG…LAVI), 286–306 (MLLV…IFQV), and 335–355 (KIIV…ISTL).

This sequence belongs to the glycosyltransferase 4 family. MraY subfamily. Requires Mg(2+) as cofactor.

The protein resides in the cell inner membrane. The catalysed reaction is UDP-N-acetyl-alpha-D-muramoyl-L-alanyl-gamma-D-glutamyl-meso-2,6-diaminopimeloyl-D-alanyl-D-alanine + di-trans,octa-cis-undecaprenyl phosphate = di-trans,octa-cis-undecaprenyl diphospho-N-acetyl-alpha-D-muramoyl-L-alanyl-D-glutamyl-meso-2,6-diaminopimeloyl-D-alanyl-D-alanine + UMP. The protein operates within cell wall biogenesis; peptidoglycan biosynthesis. Functionally, catalyzes the initial step of the lipid cycle reactions in the biosynthesis of the cell wall peptidoglycan: transfers peptidoglycan precursor phospho-MurNAc-pentapeptide from UDP-MurNAc-pentapeptide onto the lipid carrier undecaprenyl phosphate, yielding undecaprenyl-pyrophosphoryl-MurNAc-pentapeptide, known as lipid I. In Geobacter sulfurreducens (strain ATCC 51573 / DSM 12127 / PCA), this protein is Phospho-N-acetylmuramoyl-pentapeptide-transferase.